Consider the following 887-residue polypeptide: Degenerin-like protein unc-105 (887 aa).

The tract at residues 1–33 (MAEDRIKSKLRRPASIESTMSSRTKPRHKPSPM) is disordered. The Cytoplasmic segment spans residues 1 to 93 (MAEDRIKSKL…AATADGKWRW (93 aa)). Residues 94 to 114 (FWYTAFTICLLALLIQIFFLI) form a helical membrane-spanning segment. Over 115-698 (SKYRQYGKTV…SVLADLGGLT (584 aa)) the chain is Extracellular. N-linked (GlcNAc...) asparagine glycosylation is found at Asn-244, Asn-450, Asn-473, Asn-581, and Asn-599. The helical transmembrane segment at 699–719 (GLWIGASVVSLLEIVTLIVFA) threads the bilayer. At 720–887 (TQAYVRKRKG…YSAPYEHRKK (168 aa)) the chain is on the cytoplasmic side. 2 disordered regions span residues 794-815 (AIQE…NGSC) and 859-887 (SNSE…HRKK).

The protein belongs to the amiloride-sensitive sodium channel (TC 1.A.6) family. As to expression, expressed in body wall muscle.

Its subcellular location is the membrane. Ion channel which is permeable to small monovalent cations. Shown not to be H+-ion gated. May be mechanosensitive and is required for growth and muscle development. The polypeptide is Degenerin-like protein unc-105 (unc-105) (Caenorhabditis elegans).